Reading from the N-terminus, the 65-residue chain is MQGRVKWFNAEKGFGFIEREDGDDVFVHFSAIQQDGYKSLEEGQQVEFDIVDGARGPQAANVVKL.

The CSD domain maps to 3–62 (GRVKWFNAEKGFGFIEREDGDDVFVHFSAIQQDGYKSLEEGQQVEFDIVDGARGPQAANV).

As to quaternary structure, homodimer.

It is found in the cytoplasm. This chain is Cold shock-like protein CspC (cspC), found in Bacillus cereus.